Here is a 417-residue protein sequence, read N- to C-terminus: Gamma-glutamyl phosphate reductase (417 aa).

It belongs to the gamma-glutamyl phosphate reductase family.

Its subcellular location is the cytoplasm. The catalysed reaction is L-glutamate 5-semialdehyde + phosphate + NADP(+) = L-glutamyl 5-phosphate + NADPH + H(+). It functions in the pathway amino-acid biosynthesis; L-proline biosynthesis; L-glutamate 5-semialdehyde from L-glutamate: step 2/2. Functionally, catalyzes the NADPH-dependent reduction of L-glutamate 5-phosphate into L-glutamate 5-semialdehyde and phosphate. The product spontaneously undergoes cyclization to form 1-pyrroline-5-carboxylate. The polypeptide is Gamma-glutamyl phosphate reductase (Erwinia tasmaniensis (strain DSM 17950 / CFBP 7177 / CIP 109463 / NCPPB 4357 / Et1/99)).